A 417-amino-acid polypeptide reads, in one-letter code: RH-like protein IA (417 aa).

Transmembrane regions (helical) follow at residues 12 to 32 (CLPL…YFFT), 44 to 64 (LVAS…GFGF), 77 to 97 (VAFS…LDGF), 125 to 145 (ISVD…MVLV), 172 to 192 (IYVF…KPLP), 203 to 223 (TIPS…WPSF), 238 to 258 (VFNT…GSSL), 265 to 285 (ISMS…GTSC), 287 to 307 (LITS…ISIG), 331 to 351 (NFSL…VHHT), and 358 to 378 (MIGF…TIAL).

Belongs to the ammonium transporter (TC 2.A.49) family. Rh subfamily.

It is found in the membrane. In terms of biological role, may be part of an oligomeric complex which is likely to have a transport or channel function in the erythrocyte membrane. In Pan troglodytes (Chimpanzee), this protein is RH-like protein IA.